The chain runs to 883 residues: Phosphoenolpyruvate carboxylase (883 aa).

Active-site residues include His138 and Lys546.

This sequence belongs to the PEPCase type 1 family. Mg(2+) is required as a cofactor.

It carries out the reaction oxaloacetate + phosphate = phosphoenolpyruvate + hydrogencarbonate. Forms oxaloacetate, a four-carbon dicarboxylic acid source for the tricarboxylic acid cycle. This chain is Phosphoenolpyruvate carboxylase, found in Escherichia coli O127:H6 (strain E2348/69 / EPEC).